Consider the following 1147-residue polypeptide: Sterol regulatory element-binding protein 1 (1147 aa).

The interval Met1–Asp60 is transcriptional activation (acidic). Residues Met1–Arg487 are Cytoplasmic-facing. The 9aaTAD motif lies at Thr27–Leu35. Residues Gln39–Pro193 are disordered. Low complexity-rich tracts occupy residues Ala62–Ser71 and Thr78–Ser95. The span at Pro96–Thr105 shows a compositional bias: pro residues. Residues Ser98 and Ser117 each carry the phosphoserine modification. Residues Gly170–Leu190 show a composition bias toward low complexity. The interaction with LMNA stretch occupies residues Gln234 to Cys497. In terms of domain architecture, bHLH spans Glu323–Leu373. Phosphoserine; by SIK1 is present on residues Ser337 and Ser338. Residues Leu373–Ser394 form a leucine-zipper region. Ser396 is modified (phosphoserine; by AMPK). Ser402 carries the post-translational modification Phosphoserine; by SIK1. A disordered region spans residues Val421–Ser479. Ser457 bears the Phosphoserine mark. Over residues Glu465–Ser479 the composition is skewed to basic and acidic residues. A helical membrane pass occupies residues Leu488 to Gly508. The Lumenal segment spans residues Ala509–Pro547. A helical membrane pass occupies residues Val548 to Gly568. Residues Glu569–Ser1147 are Cytoplasmic-facing. Position 1060 is a phosphoserine (Ser1060).

It belongs to the SREBP family. As to quaternary structure, forms a tight complex with SCAP, the SCAP-SREBP complex, in the endoplasmic reticulum membrane and the Golgi apparatus. Interacts with PAQR3; the interaction anchors the SCAP-SREBP complex to the Golgi apparatus in low cholesterol conditions. Efficient DNA binding of the soluble transcription factor fragment requires dimerization with another bHLH protein. Interacts with CEBPA, the interaction produces a transcriptional synergy. Interacts with LMNA. In terms of processing, processed in the Golgi apparatus, releasing the protein from the membrane. At low cholesterol the SCAP-SREBP complex is recruited into COPII vesicles for export from the endoplasmic reticulum. In the Golgi, complex SREBPs are cleaved sequentially by site-1 (MBTPS1, S1P) and site-2 (MBTPS2, S2P) protease. The first cleavage by site-1 protease occurs within the luminal loop, the second cleavage by site-2 protease occurs within the first transmembrane domain, releasing the transcription factor from the Golgi membrane. Post-translationally, phosphorylated by AMPK, leading to suppress protein processing and nuclear translocation, and repress target gene expression. Phosphorylation at Ser-402 by SIK1 represses activity possibly by inhibiting DNA-binding. SCAP-free SREBF1 is ubiquitinated by the BCR(ARMC5) complex, leading to its degradation. In terms of processing, ubiquitinated; the nuclear form has a rapid turnover and is rapidly ubiquitinated and degraded by the proteasome in the nucleus. As to expression, expressed in a wide variety of tissues, most abundant in liver and adrenal gland. In fetal tissues lung and liver shows highest expression. In terms of tissue distribution, predominates in hepatoma cell lines. Also expressed in kidney, brain, white fat, and muscle. Predominantly expressed in liver and adipose tissues. Also expressed in kidney, brain, white fat, and muscle.

It localises to the endoplasmic reticulum membrane. Its subcellular location is the golgi apparatus membrane. The protein localises to the cytoplasmic vesicle. It is found in the COPII-coated vesicle membrane. The protein resides in the nucleus. Activation by cleavage is down-regulated upon activation of SIRT3-dependent PRKAA1/AMPK-alpha signaling cascade which leads to inhibition of ATP-consuming lipogenesis to restore cellular energy balance. Its function is as follows. Precursor of the transcription factor form (Processed sterol regulatory element-binding protein 1), which is embedded in the endoplasmic reticulum membrane. Low sterol concentrations promote processing of this form, releasing the transcription factor form that translocates into the nucleus and activates transcription of genes involved in cholesterol biosynthesis and lipid homeostasis. Functionally, key transcription factor that regulates expression of genes involved in cholesterol biosynthesis and lipid homeostasis. Binds to the sterol regulatory element 1 (SRE-1) (5'-ATCACCCCAC-3'). Has dual sequence specificity binding to both an E-box motif (5'-ATCACGTGA-3') and to SRE-1 (5'-ATCACCCCAC-3'). Regulates the promoters of genes involved in cholesterol biosynthesis and the LDL receptor (LDLR) pathway of sterol regulation. Isoform expressed only in select tissues, which has higher transcriptional activity compared to SREBP-1C. Able to stimulate both lipogenic and cholesterogenic gene expression. Has a role in the nutritional regulation of fatty acids and triglycerides in lipogenic organs such as the liver. Required for innate immune response in macrophages by regulating lipid metabolism. In terms of biological role, predominant isoform expressed in most tissues, which has weaker transcriptional activity compared to isoform SREBP-1A. Primarily controls expression of lipogenic gene. Strongly activates global lipid synthesis in rapidly growing cells. Its function is as follows. The absence of Golgi proteolytic processing requirement makes this isoform constitutively active in transactivation of lipogenic gene promoters. This chain is Sterol regulatory element-binding protein 1, found in Homo sapiens (Human).